Reading from the N-terminus, the 47-residue chain is Defensin-like protein 2 (47 aa).

Cystine bridges form between cysteine 3/cysteine 47, cysteine 14/cysteine 36, cysteine 20/cysteine 41, and cysteine 24/cysteine 43.

The protein belongs to the DEFL family.

The protein is Defensin-like protein 2 of Zea mays (Maize).